Here is a 142-residue protein sequence, read N- to C-terminus: Endoribonuclease YbeY (142 aa).

Residues His-107, His-111, and Asp-117 each coordinate Zn(2+).

The protein belongs to the endoribonuclease YbeY family. Zn(2+) is required as a cofactor.

The protein localises to the cytoplasm. Its function is as follows. Single strand-specific metallo-endoribonuclease involved in late-stage 70S ribosome quality control and in maturation of the 3' terminus of the 16S rRNA. The protein is Endoribonuclease YbeY of Chlorobium phaeobacteroides (strain DSM 266 / SMG 266 / 2430).